Consider the following 128-residue polypeptide: SH2 domain-containing protein 1A (128 aa).

In terms of domain architecture, SH2 spans 6-102 (VYHGKISRET…GIVIPLQYPV (97 aa)). The tract at residues 67 to 92 (ETAPGVHKRFFRKIKNLISAFQKPDQ) is interaction with FYN SH3 domain. At lysine 89 the chain carries N6-acetyllysine. Positions 104–128 (KKPSARSTQGATGRRDDPDVFLKTP) are disordered. The span at 116–128 (GRRDDPDVFLKTP) shows a compositional bias: basic and acidic residues.

In terms of assembly, interacts with CD84, CD244, LY9, SLAMF1 and FYN. Interacts with NTRK1, NTRK2 and NTRK3.

It localises to the cytoplasm. Its function is as follows. Cytoplasmic adapter regulating receptors of the signaling lymphocytic activation molecule (SLAM) family such as SLAMF1, CD244, LY9, CD84, SLAMF6 and SLAMF7. In SLAM signaling seems to cooperate with SH2D1B/EAT-2. Initially it has been proposed that association with SLAMF1 prevents SLAMF1 binding to inhibitory effectors including INPP5D/SHIP1 and PTPN11/SHP-2. However, by simultaneous interactions, recruits FYN which subsequently phosphorylates and activates SLAMF1. Positively regulates CD244/2B4- and CD84-mediated natural killer (NK) cell functions. Can also promote CD48-, SLAMF6 -, LY9-, and SLAMF7-mediated NK cell activation. In the context of NK cell-mediated cytotoxicity enhances conjugate formation with target cells. May also regulate the activity of the neurotrophin receptors NTRK1, NTRK2 and NTRK3. This Bos taurus (Bovine) protein is SH2 domain-containing protein 1A (SH2D1A).